The sequence spans 217 residues: Large ribosomal subunit protein uL4 (217 aa).

The disordered stretch occupies residues 42–100 (RAAARQGTHSTKTRGDVSGGGRKPYRQKGTGRARQGSTRAPQFTGGGVVHGPKPRDYSQ).

This sequence belongs to the universal ribosomal protein uL4 family. Part of the 50S ribosomal subunit.

Functionally, one of the primary rRNA binding proteins, this protein initially binds near the 5'-end of the 23S rRNA. It is important during the early stages of 50S assembly. It makes multiple contacts with different domains of the 23S rRNA in the assembled 50S subunit and ribosome. Its function is as follows. Forms part of the polypeptide exit tunnel. The chain is Large ribosomal subunit protein uL4 from Mycolicibacterium paratuberculosis (strain ATCC BAA-968 / K-10) (Mycobacterium paratuberculosis).